A 746-amino-acid chain; its full sequence is Disintegrin and metalloproteinase domain-containing protein 18 (746 aa).

An N-terminal signal peptide occupies residues 1–16 (MFFLLALLTELGRLQA). The propeptide occupies 17-183 (HVGSEGIFLH…QKKNLSKLLP (167 aa)). N-linked (GlcNAc...) asparagine glycans are attached at residues asparagine 36, asparagine 122, asparagine 149, asparagine 156, asparagine 177, and asparagine 294. At 177-687 (NLSKLLPQYL…EKGYNAHWNN (511 aa)) the chain is on the extracellular side. A Peptidase M12B domain is found at 184-381 (QYLEIYIIVE…FEAKCLQKLS (198 aa)). Cystine bridges form between cysteine 293–cysteine 376, cysteine 335–cysteine 360, cysteine 337–cysteine 342, and cysteine 450–cysteine 471. Residues asparagine 359, asparagine 465, asparagine 611, and asparagine 625 are each glycosylated (N-linked (GlcNAc...) asparagine). In terms of domain architecture, Disintegrin spans 390–479 (QPVCGNGILE…DCVPDTYALN (90 aa)). The EGF-like domain occupies 620–654 (TGYNCNTTTKCKGKGICNNFGNCQCFPGHKPPDCK). 3 disulfide bridges follow: cysteine 624–cysteine 636, cysteine 630–cysteine 642, and cysteine 644–cysteine 653. A helical membrane pass occupies residues 688-708 (WFILSFYIVLPFFIIFTIVIF). Topologically, residues 709–746 (KRNEIRKLCNRENTELIHPLYQKAMMWNINIAQNFRSK) are cytoplasmic.

In terms of processing, the prodomain and the metalloprotease-like domain are cleaved during the epididymal maturation of the spermatozoa. As to expression, expressed predominantly in adult and prepubertal testis.

Its subcellular location is the membrane. Functionally, sperm surface membrane protein that may be involved in spermatogenesis and fertilization. This is a non catalytic metalloprotease-like protein. This is Disintegrin and metalloproteinase domain-containing protein 18 (ADAM18) from Macaca fascicularis (Crab-eating macaque).